Here is a 270-residue protein sequence, read N- to C-terminus: Putative phosphoenolpyruvate synthase regulatory protein (270 aa).

150–157 serves as a coordination point for ADP; sequence GVSRSGKT.

The protein belongs to the pyruvate, phosphate/water dikinase regulatory protein family. PSRP subfamily.

The enzyme catalyses [pyruvate, water dikinase] + ADP = [pyruvate, water dikinase]-phosphate + AMP + H(+). It catalyses the reaction [pyruvate, water dikinase]-phosphate + phosphate + H(+) = [pyruvate, water dikinase] + diphosphate. Its function is as follows. Bifunctional serine/threonine kinase and phosphorylase involved in the regulation of the phosphoenolpyruvate synthase (PEPS) by catalyzing its phosphorylation/dephosphorylation. This Cupriavidus metallidurans (strain ATCC 43123 / DSM 2839 / NBRC 102507 / CH34) (Ralstonia metallidurans) protein is Putative phosphoenolpyruvate synthase regulatory protein.